The chain runs to 145 residues: UPF0260 protein VS_0923 (145 aa).

This sequence belongs to the UPF0260 family.

This is UPF0260 protein VS_0923 from Vibrio atlanticus (strain LGP32) (Vibrio splendidus (strain Mel32)).